The sequence spans 227 residues: Cytochrome c oxidase subunit 2 (227 aa).

At 1-14 the chain is on the mitochondrial intermembrane side; the sequence is MAHAAQMGLQDATS. Residues 15-45 form a helical membrane-spanning segment; sequence PIMEELISFHDHALMIIFLISFLVLYALFLT. The Mitochondrial matrix segment spans residues 46-59; that stretch reads LTTKLTNTNITDAQ. A helical transmembrane segment spans residues 60-87; sequence EMETVWTILPAIILVLIALPSLRILYLT. At 88–227 the chain is on the mitochondrial intermembrane side; sequence DEINDPSFTI…IFEMGPVFTL (140 aa). Cu cation contacts are provided by His-161, Cys-196, Glu-198, Cys-200, His-204, and Met-207. Mg(2+) is bound at residue Glu-198.

Belongs to the cytochrome c oxidase subunit 2 family. Component of the cytochrome c oxidase (complex IV, CIV), a multisubunit enzyme composed of 14 subunits. The complex is composed of a catalytic core of 3 subunits MT-CO1, MT-CO2 and MT-CO3, encoded in the mitochondrial DNA, and 11 supernumerary subunits COX4I, COX5A, COX5B, COX6A, COX6B, COX6C, COX7A, COX7B, COX7C, COX8 and NDUFA4, which are encoded in the nuclear genome. The complex exists as a monomer or a dimer and forms supercomplexes (SCs) in the inner mitochondrial membrane with NADH-ubiquinone oxidoreductase (complex I, CI) and ubiquinol-cytochrome c oxidoreductase (cytochrome b-c1 complex, complex III, CIII), resulting in different assemblies (supercomplex SCI(1)III(2)IV(1) and megacomplex MCI(2)III(2)IV(2)). Found in a complex with TMEM177, COA6, COX18, COX20, SCO1 and SCO2. Interacts with TMEM177 in a COX20-dependent manner. Interacts with COX20. Interacts with COX16. The cofactor is Cu cation.

The protein resides in the mitochondrion inner membrane. It carries out the reaction 4 Fe(II)-[cytochrome c] + O2 + 8 H(+)(in) = 4 Fe(III)-[cytochrome c] + 2 H2O + 4 H(+)(out). Component of the cytochrome c oxidase, the last enzyme in the mitochondrial electron transport chain which drives oxidative phosphorylation. The respiratory chain contains 3 multisubunit complexes succinate dehydrogenase (complex II, CII), ubiquinol-cytochrome c oxidoreductase (cytochrome b-c1 complex, complex III, CIII) and cytochrome c oxidase (complex IV, CIV), that cooperate to transfer electrons derived from NADH and succinate to molecular oxygen, creating an electrochemical gradient over the inner membrane that drives transmembrane transport and the ATP synthase. Cytochrome c oxidase is the component of the respiratory chain that catalyzes the reduction of oxygen to water. Electrons originating from reduced cytochrome c in the intermembrane space (IMS) are transferred via the dinuclear copper A center (CU(A)) of subunit 2 and heme A of subunit 1 to the active site in subunit 1, a binuclear center (BNC) formed by heme A3 and copper B (CU(B)). The BNC reduces molecular oxygen to 2 water molecules using 4 electrons from cytochrome c in the IMS and 4 protons from the mitochondrial matrix. The protein is Cytochrome c oxidase subunit 2 (MT-CO2) of Symphalangus syndactylus (Siamang).